We begin with the raw amino-acid sequence, 204 residues long: Imidazole glycerol phosphate synthase subunit HisH (204 aa).

The Glutamine amidotransferase type-1 domain occupies 5-204; the sequence is KVVIIDTGCA…AKLIQNFLEL (200 aa). Cysteine 80 functions as the Nucleophile in the catalytic mechanism. Active-site residues include histidine 186 and glutamate 188.

Heterodimer of HisH and HisF.

The protein localises to the cytoplasm. The catalysed reaction is 5-[(5-phospho-1-deoxy-D-ribulos-1-ylimino)methylamino]-1-(5-phospho-beta-D-ribosyl)imidazole-4-carboxamide + L-glutamine = D-erythro-1-(imidazol-4-yl)glycerol 3-phosphate + 5-amino-1-(5-phospho-beta-D-ribosyl)imidazole-4-carboxamide + L-glutamate + H(+). The enzyme catalyses L-glutamine + H2O = L-glutamate + NH4(+). Its pathway is amino-acid biosynthesis; L-histidine biosynthesis; L-histidine from 5-phospho-alpha-D-ribose 1-diphosphate: step 5/9. IGPS catalyzes the conversion of PRFAR and glutamine to IGP, AICAR and glutamate. The HisH subunit catalyzes the hydrolysis of glutamine to glutamate and ammonia as part of the synthesis of IGP and AICAR. The resulting ammonia molecule is channeled to the active site of HisF. This chain is Imidazole glycerol phosphate synthase subunit HisH, found in Vibrio parahaemolyticus serotype O3:K6 (strain RIMD 2210633).